Here is a 534-residue protein sequence, read N- to C-terminus: Cytochrome P450 monooxygenase AN1598 (534 aa).

Residue asparagine 3 is glycosylated (N-linked (GlcNAc...) asparagine). The helical transmembrane segment at 25-45 (LYLEILGVLSVVYLLQTLVAY) threads the bilayer. The N-linked (GlcNAc...) asparagine glycan is linked to asparagine 95. Residue cysteine 464 coordinates heme. Asparagine 498 is a glycosylation site (N-linked (GlcNAc...) asparagine).

It belongs to the cytochrome P450 family. Heme is required as a cofactor.

It localises to the membrane. Its pathway is secondary metabolite biosynthesis; terpenoid biosynthesis. In terms of biological role, bifunctional terpene synthase; part of the gene cluster that mediates the biosynthesis of the diterpene ent-pimara-8(14),15-diene (PD). Within the cluster, the HMG-CoA reductase AN1593 functions in the mevalonate pathway, which produces isoprenoid precursors. The geranylgeranyl pyrophosphate (GGPP) synthase AN1592 is needed in the formation of GGPP, the precursor for diterpenes. Lastly, the pimaradiene synthase pbcA performs the 2 cyclization steps that convert GGPP to ent-pimara-8(14),15-diene. The putative roles of the remaining cluster enzymes in ent-pimara-8(14),15-diene biosynthesis is unclear. The cytochrome P450 monooxygenase AN1598, the glutathione S-transferase AN1595, the oxidoreductases AN1596 and AN1597 probably function as decorative enzymes. It is possible that in biological conditions the compound is oxidized to ent-pimara-8(14),15-dien-19-oic acid, which is a bioactive diterpene compound predominant in many plant extracts. The protein is Cytochrome P450 monooxygenase AN1598 of Emericella nidulans (strain FGSC A4 / ATCC 38163 / CBS 112.46 / NRRL 194 / M139) (Aspergillus nidulans).